A 187-amino-acid polypeptide reads, in one-letter code: Peptidyl-tRNA hydrolase (187 aa).

A tRNA-binding site is contributed by Tyr18. The Proton acceptor role is filled by His23. TRNA is bound by residues Phe65, Asn67, and Asn113.

The protein belongs to the PTH family. In terms of assembly, monomer.

Its subcellular location is the cytoplasm. The catalysed reaction is an N-acyl-L-alpha-aminoacyl-tRNA + H2O = an N-acyl-L-amino acid + a tRNA + H(+). Functionally, hydrolyzes ribosome-free peptidyl-tRNAs (with 1 or more amino acids incorporated), which drop off the ribosome during protein synthesis, or as a result of ribosome stalling. Its function is as follows. Catalyzes the release of premature peptidyl moieties from peptidyl-tRNA molecules trapped in stalled 50S ribosomal subunits, and thus maintains levels of free tRNAs and 50S ribosomes. The chain is Peptidyl-tRNA hydrolase from Coxiella burnetii (strain CbuK_Q154) (Coxiella burnetii (strain Q154)).